The sequence spans 324 residues: Delta-aminolevulinic acid dehydratase (324 aa).

Cys120, Cys122, and Cys130 together coordinate Zn(2+). The active-site Schiff-base intermediate with substrate is Lys195. Residues Arg205 and Arg216 each contribute to the 5-aminolevulinate site. Glu232 lines the Mg(2+) pocket. Lys247 serves as the catalytic Schiff-base intermediate with substrate. Ser273 and Tyr312 together coordinate 5-aminolevulinate.

It belongs to the ALAD family. In terms of assembly, homooctamer. Requires Zn(2+) as cofactor.

The catalysed reaction is 2 5-aminolevulinate = porphobilinogen + 2 H2O + H(+). It functions in the pathway porphyrin-containing compound metabolism; protoporphyrin-IX biosynthesis; coproporphyrinogen-III from 5-aminolevulinate: step 1/4. With respect to regulation, allosteric enzyme. Stimulated by magnesium ions. Catalyzes an early step in the biosynthesis of tetrapyrroles. Binds two molecules of 5-aminolevulinate per subunit, each at a distinct site, and catalyzes their condensation to form porphobilinogen. The sequence is that of Delta-aminolevulinic acid dehydratase (hemB) from Escherichia coli (strain K12).